The primary structure comprises 505 residues: Glutamate--tRNA ligase (505 aa).

Positions 12 to 22 (PSPTGDPHVGT) match the 'HIGH' region motif. The short motif at 253–257 (KLSKR) is the 'KMSKS' region element. Position 256 (lysine 256) interacts with ATP.

The protein belongs to the class-I aminoacyl-tRNA synthetase family. Glutamate--tRNA ligase type 1 subfamily. As to quaternary structure, monomer.

The protein resides in the cytoplasm. It catalyses the reaction tRNA(Glu) + L-glutamate + ATP = L-glutamyl-tRNA(Glu) + AMP + diphosphate. Catalyzes the attachment of glutamate to tRNA(Glu) in a two-step reaction: glutamate is first activated by ATP to form Glu-AMP and then transferred to the acceptor end of tRNA(Glu). The sequence is that of Glutamate--tRNA ligase from Chlamydia caviae (strain ATCC VR-813 / DSM 19441 / 03DC25 / GPIC) (Chlamydophila caviae).